Here is a 103-residue protein sequence, read N- to C-terminus: Large ribosomal subunit protein bL21 (103 aa).

This sequence belongs to the bacterial ribosomal protein bL21 family. As to quaternary structure, part of the 50S ribosomal subunit. Contacts protein L20.

Its function is as follows. This protein binds to 23S rRNA in the presence of protein L20. In Pseudomonas aeruginosa (strain LESB58), this protein is Large ribosomal subunit protein bL21.